A 1050-amino-acid chain; its full sequence is Inositol hexakisphosphate kinase 1 (1050 aa).

Disordered regions lie at residues K87–S117, P129–V177, R269–H319, and S396–D423. Phosphoserine is present on S150. The segment covering K156–P173 has biased composition (polar residues). The span at E290 to E306 shows a compositional bias: basic and acidic residues. Acidic residues predominate over residues Q307–D316. Residue S396 is modified to Phosphoserine. Positions N402–V417 are enriched in basic and acidic residues. S469 carries the phosphoserine modification. The span at N508 to S522 shows a compositional bias: low complexity. Disordered stretches follow at residues N508–S539 and R562–Q625. A phosphoserine mark is found at S537, S539, S566, S583, S589, S646, S664, and S670. Polar residues predominate over residues S566–L624. P772 to G780 provides a ligand contact to substrate.

It belongs to the inositol phosphokinase (IPK) family.

The protein localises to the cytoplasm. The enzyme catalyses 1D-myo-inositol hexakisphosphate + ATP = 5-diphospho-1D-myo-inositol 1,2,3,4,6-pentakisphosphate + ADP. The catalysed reaction is 1-diphospho-1D-myo-inositol 2,3,4,5,6-pentakisphosphate + ATP + H(+) = 1,5-bis(diphospho)-1D-myo-inositol 2,3,4,6-tetrakisphosphate + ADP. Functionally, converts inositol hexakisphosphate (InsP6) to diphosphoinositol pentakisphosphate (InsP7/PP-InsP5). Involved in phosphate regulation and polyphosphate accumulation. Required for resistance to salt stress, cell wall integrity, vacuole morphogenesis, and telomere maintenance. In Saccharomyces cerevisiae (strain ATCC 204508 / S288c) (Baker's yeast), this protein is Inositol hexakisphosphate kinase 1 (KCS1).